A 49-amino-acid polypeptide reads, in one-letter code: GVSCLCDSDGPSVRGNTLSGILWFYPSGCPSGWHNCKAHGPTIGWCCKQ.

Disulfide bonds link Cys4–Cys46, Cys6–Cys36, and Cys29–Cys47.

It belongs to the sea anemone sodium channel inhibitory toxin family. Type I subfamily.

The protein resides in the secreted. It localises to the nematocyst. Binds specifically to voltage-gated sodium channels (Nav) (site 3), thereby delaying their inactivation during signal transduction. Thus it may strongly stimulate mammalian cardiac muscle contraction. This Anthopleura xanthogrammica (Giant green sea anemone) protein is Delta-actitoxin-Axm1h.